We begin with the raw amino-acid sequence, 238 residues long: Fmr1 neighbor protein (238 aa).

The disordered stretch occupies residues 1–30 (MPSDRRPSQRRNRSKSRDYRGARSKVTRAD). The Cytoplasmic segment spans residues 1-79 (MPSDRRPSQR…CLQYLWARRH (79 aa)). The span at 15–30 (KSRDYRGARSKVTRAD) shows a compositional bias: basic and acidic residues. The helical transmembrane segment at 80–100 (LGLLLLLFWTLVILFRPVNTA) threads the bilayer. Over 101–178 (KLPILAEAAE…VRDKPTQVLR (78 aa)) the chain is Extracellular. In terms of domain architecture, P-type spans 118–176 (MLDFFFPTACIIRDNQVVVACNNQPYLSESECLKSKCCSSTSGTIIKCYAPVRDKPTQV). Residues 179 to 199 (VFGLAAISILVLGFLPMCCCS) form a helical membrane-spanning segment. Over 200–238 (MCWRRKRMNRMLKVLKKQKSKGKKPKGRKASEERALLSH) the chain is Cytoplasmic. Residues 214 to 227 (LKKQKSKGKKPKGR) show a composition bias toward basic residues. The segment at 214–238 (LKKQKSKGKKPKGRKASEERALLSH) is disordered. Residues 228 to 238 (KASEERALLSH) show a composition bias toward basic and acidic residues.

Its subcellular location is the membrane. The sequence is that of Fmr1 neighbor protein from Mus musculus (Mouse).